Reading from the N-terminus, the 419-residue chain is Putative trans-acting enoyl reductase MT2525 (419 aa).

An Isoglutamyl lysine isopeptide (Lys-Gln) (interchain with Q-Cter in protein Pup) cross-link involves residue Lys-127. Positions 197 to 232 (NDPDARRQLSDPYMLSPDRGAEPELGPQPDLPSRRG) are disordered. The chain crosses the membrane as a helical span at residues 284–304 (VLAPVVSVVGGGVGNAMFGLA).

Belongs to the saccharopine dehydrogenase family. Enoyl reductase subfamily.

The protein resides in the cell membrane. The protein is Putative trans-acting enoyl reductase MT2525 of Mycobacterium tuberculosis (strain CDC 1551 / Oshkosh).